The chain runs to 656 residues: Probable serine/threonine-protein kinase sky1 (656 aa).

The tract at residues 1–127 (MSDIQQDSTS…KQGGYHPVRR (127 aa)) is disordered. Gly residues predominate over residues 16–48 (TSLGGTSLGGTSLGGTSLGGTSLGGTSLGGTSL). Composition is skewed to low complexity over residues 49–64 (GGST…STNS) and 72–89 (TSSN…NNNE). Positions 96-108 (AGSSNKSFMPLNN) are enriched in polar residues. The 514-residue stretch at 135-648 (YQVVDKLGWG…AKDCLNHTWL (514 aa)) folds into the Protein kinase domain. 141-149 (LGWGHFSTV) provides a ligand contact to ATP. Residues 157–185 (TPITTSSSSSSTTTTTTSSSSNGNGNGNG) form a disordered region. The span at 160–179 (TTSSSSSSTTTTTTSSSSNG) shows a compositional bias: low complexity. Lys-197 serves as a coordination point for ATP. The active-site Proton acceptor is the Asp-298. The tract at residues 330 to 454 (RTSSSNKQSQ…TTATATATTT (125 aa)) is disordered. The segment covering 332-355 (SSSNKQSQQQQQPQQQQSQQNIND) has biased composition (low complexity). Composition is skewed to basic and acidic residues over residues 383 to 401 (SNRD…DDNK) and 413 to 440 (ENTD…KEEP). Low complexity predominate over residues 441–454 (TTTTTTATATATTT).

This sequence belongs to the protein kinase superfamily. CMGC Ser/Thr protein kinase family.

The enzyme catalyses L-seryl-[protein] + ATP = O-phospho-L-seryl-[protein] + ADP + H(+). The catalysed reaction is L-threonyl-[protein] + ATP = O-phospho-L-threonyl-[protein] + ADP + H(+). This is Probable serine/threonine-protein kinase sky1 (sky1) from Dictyostelium discoideum (Social amoeba).